Consider the following 446-residue polypeptide: Chromogranin-A (446 aa).

A signal peptide spans 1 to 16 (SAAALALLLCAGQVIA). Cysteine 33 and cysteine 54 are disulfide-bonded. The tract at residues 85–426 (AKERSHQQKK…RPEDQELESL (342 aa)) is disordered. The residue at position 97 (serine 97) is a Phosphoserine. The span at 105–138 (VLEKQNDQAELKEGTEEASSKEAAEKRGDSKEVE) shows a compositional bias: basic and acidic residues. Positions 160–171 (EAEDQTPGEEEA) are enriched in acidic residues. Serine 209 is modified (phosphoserine). The segment covering 226-243 (AGEKAVPEEEGPRSEAFD) has biased composition (basic and acidic residues). Serine 286 carries the phosphoserine modification. Glycine 304 carries the glycine amide modification. Residue serine 319 is modified to Phosphoserine. The segment covering 319-346 (SEEWENAKRWSKMDRLAKELTAEKRLQG) has biased composition (basic and acidic residues). Positions 347-357 (EEEEEEEEEDP) are enriched in acidic residues. Serine 360 is subject to Phosphoserine. A Methionine sulfoxide modification is found at methionine 361. Serine 387, serine 391, serine 413, and serine 427 each carry phosphoserine. Positions 403–420 (YLEEKKEEEGSANRRPED) are enriched in basic and acidic residues. An O-linked (Xyl...) (chondroitin sulfate) serine glycan is attached at serine 413.

The protein belongs to the chromogranin/secretogranin protein family. In terms of assembly, self-interacts; self-assembly is promoted in vitro by chondroitin sulfate attachment which occurs at mildly acidic pH conditions. Interacts with SCG3. Interacts with ITPR1 in the secretory granules. In terms of processing, O-glycosylated; contains chondroitin sulfate (CS). CS attachment is pH-dependent, being observed at mildly acidic conditions of pH 5 but not at neutral pH, and promotes self-assembly in vitro. Post-translationally, parathyroid CHGA is sulfated on tyrosine residues, whereas adrenal CHGA seems to be mainly sulfated on oligosaccharide residues.

It is found in the secreted. The protein resides in the cytoplasmic vesicle. It localises to the secretory vesicle. The protein localises to the neuronal dense core vesicle. Functionally, strongly inhibits glucose induced insulin release from the pancreas. Its function is as follows. Inhibits low calcium-stimulated parathyroid cell secretion. In terms of biological role, inhibits catecholamine release from chromaffin cells and noradrenergic neurons by acting as a non-competitive nicotinic cholinergic antagonist. Can induce mast cell migration, degranulation and production of cytokines and chemokines. Regulates granule biogenesis in endocrine cells by up-regulating the transcription of protease nexin 1 (SERPINE2) via a cAMP-PKA-SP1 pathway. This leads to inhibition of granule protein degradation in the Golgi complex which in turn promotes granule formation. The chain is Chromogranin-A (CHGA) from Sus scrofa (Pig).